A 160-amino-acid chain; its full sequence is Cyclic di-GMP-binding protein Smlt4090 (160 aa).

3',3'-c-di-GMP-binding residues include Lys33, Lys132, Arg134, Asp135, and Asp160.

The protein belongs to the YajQ family.

Its function is as follows. Cyclic di-GMP effector that significantly contributes to virulence. Binds bis-(3',5')-cyclic diguanylate (cyclic di-GMP or c-di-GMP), an important bacterial second messenger that controls a wide range of cellular processes. The protein is Cyclic di-GMP-binding protein Smlt4090 of Stenotrophomonas maltophilia (strain K279a).